Reading from the N-terminus, the 108-residue chain is UPF0060 membrane protein RHOS4_03690 (108 aa).

4 helical membrane-spanning segments follow: residues 5–25 (LAAY…VWAW), 32–52 (ALWL…LALT), 62–82 (AVYG…VEGV), and 86–106 (RWDM…LWAP).

This sequence belongs to the UPF0060 family.

It is found in the cell inner membrane. The chain is UPF0060 membrane protein RHOS4_03690 from Cereibacter sphaeroides (strain ATCC 17023 / DSM 158 / JCM 6121 / CCUG 31486 / LMG 2827 / NBRC 12203 / NCIMB 8253 / ATH 2.4.1.) (Rhodobacter sphaeroides).